Here is a 91-residue protein sequence, read N- to C-terminus: MFCVIYRSPQRDQTYLYVEKKDDFSRVPEALLKGFGKPKLAMILPLDGSKKLVGADIKKVKTALREEGFYLQLPPPLESLLKIHLSDANKV.

A YcgL domain is found at 1–85 (MFCVIYRSPQ…PLESLLKIHL (85 aa)).

In Erwinia tasmaniensis (strain DSM 17950 / CFBP 7177 / CIP 109463 / NCPPB 4357 / Et1/99), this protein is YcgL domain-containing protein ETA_15380.